We begin with the raw amino-acid sequence, 211 residues long: Ribosomal RNA small subunit methyltransferase G (211 aa).

S-adenosyl-L-methionine contacts are provided by residues Gly81, Leu86, 132 to 133, and Arg147; that span reads VE.

This sequence belongs to the methyltransferase superfamily. RNA methyltransferase RsmG family.

It is found in the cytoplasm. It carries out the reaction guanosine(527) in 16S rRNA + S-adenosyl-L-methionine = N(7)-methylguanosine(527) in 16S rRNA + S-adenosyl-L-homocysteine. Functionally, specifically methylates the N7 position of guanine in position 527 of 16S rRNA. This Actinobacillus succinogenes (strain ATCC 55618 / DSM 22257 / CCUG 43843 / 130Z) protein is Ribosomal RNA small subunit methyltransferase G.